The primary structure comprises 274 residues: Mitochondrial S-adenosylmethionine carrier protein (274 aa).

Solcar repeat units lie at residues 4–77, 86–168, and 177–265; these read PGFT…VKSL, FKPV…LKAL, and VDSW…ARSL. 6 consecutive transmembrane segments (helical) span residues 5 to 25, 49 to 69, 85 to 105, 142 to 162, 182 to 202, and 238 to 258; these read GFTASLVAGGVAGVSVDLILF, IYAGVPSAAVGSFPNAAAFFL, HFKPVKHMLAASTGEVVACLI, RGYKSTVLREIPFSLVQFPLW, SAVCGAFAGGFAAAVTTPLDV, and FAGVLPRMAAISMGGFIFLGA.

The protein belongs to the mitochondrial carrier (TC 2.A.29) family.

Its subcellular location is the mitochondrion inner membrane. It catalyses the reaction S-adenosyl-L-homocysteine(out) + S-adenosyl-L-methionine(in) = S-adenosyl-L-homocysteine(in) + S-adenosyl-L-methionine(out). Its function is as follows. Mitochondrial S-adenosyl-L-methionine/S-adenosyl-L-homocysteine antiporter. Mediates the exchange of cytosolic S-adenosyl-L-methionine, the predominant methyl-group donor for macromolecule methylation processes, for mitochondrial S-adenosylhomocysteine(SAH), a by-product of methylation reactions. In Mus musculus (Mouse), this protein is Mitochondrial S-adenosylmethionine carrier protein.